We begin with the raw amino-acid sequence, 285 residues long: Putative ABC transporter ATP-binding protein CPE0195 (285 aa).

Residues 6–242 (LKVEELNYNY…KEVIRKVNLR (237 aa)) form the ABC transporter domain. 39 to 46 (GGNGVGKS) lines the ATP pocket.

It belongs to the ABC transporter superfamily.

The protein localises to the cell membrane. Probably part of an ABC transporter complex. Responsible for energy coupling to the transport system. This chain is Putative ABC transporter ATP-binding protein CPE0195, found in Clostridium perfringens (strain 13 / Type A).